The following is an 87-amino-acid chain: Large ribosomal subunit protein eL34 (87 aa).

The protein belongs to the eukaryotic ribosomal protein eL34 family.

This chain is Large ribosomal subunit protein eL34, found in Sulfurisphaera tokodaii (strain DSM 16993 / JCM 10545 / NBRC 100140 / 7) (Sulfolobus tokodaii).